The sequence spans 500 residues: Aspartyl/glutamyl-tRNA(Asn/Gln) amidotransferase subunit B (500 aa).

The protein belongs to the GatB/GatE family. GatB subfamily. As to quaternary structure, heterotrimer of A, B and C subunits.

The catalysed reaction is L-glutamyl-tRNA(Gln) + L-glutamine + ATP + H2O = L-glutaminyl-tRNA(Gln) + L-glutamate + ADP + phosphate + H(+). It carries out the reaction L-aspartyl-tRNA(Asn) + L-glutamine + ATP + H2O = L-asparaginyl-tRNA(Asn) + L-glutamate + ADP + phosphate + 2 H(+). Allows the formation of correctly charged Asn-tRNA(Asn) or Gln-tRNA(Gln) through the transamidation of misacylated Asp-tRNA(Asn) or Glu-tRNA(Gln) in organisms which lack either or both of asparaginyl-tRNA or glutaminyl-tRNA synthetases. The reaction takes place in the presence of glutamine and ATP through an activated phospho-Asp-tRNA(Asn) or phospho-Glu-tRNA(Gln). This is Aspartyl/glutamyl-tRNA(Asn/Gln) amidotransferase subunit B from Rhizobium leguminosarum bv. trifolii (strain WSM2304).